Here is an 89-residue protein sequence, read N- to C-terminus: Large ribosomal subunit protein bL27 (89 aa).

The tract at residues 1-21 (MAHKKAGGSSRNGRDSAGRRL) is disordered.

This sequence belongs to the bacterial ribosomal protein bL27 family.

This chain is Large ribosomal subunit protein bL27, found in Novosphingobium aromaticivorans (strain ATCC 700278 / DSM 12444 / CCUG 56034 / CIP 105152 / NBRC 16084 / F199).